The following is a 234-amino-acid chain: Protein fmp52, mitochondrial (234 aa).

A mitochondrion-targeting transit peptide spans 1-36 (MANVALLGCTGMVGSHILTHLLGNSSVARIDTISRR).

It belongs to the FMP52 family.

It is found in the mitochondrion outer membrane. In Aspergillus niger (strain ATCC MYA-4892 / CBS 513.88 / FGSC A1513), this protein is Protein fmp52, mitochondrial (fmp52).